The following is a 1146-amino-acid chain: ATP-dependent helicase/deoxyribonuclease subunit B (1146 aa).

The UvrD-like helicase ATP-binding domain maps to 1–280 (MSLRFIYGRA…LNSKPLFRFS (280 aa)). An ATP-binding site is contributed by 8–15 (GRAGSGKT). Residues 276-584 (LFRFSQSPEL…LVGSLERSRS (309 aa)) enclose the UvrD-like helicase C-terminal domain. Cys786, Cys1105, Cys1108, and Cys1114 together coordinate [4Fe-4S] cluster.

It belongs to the helicase family. AddB/RexB type 1 subfamily. Heterodimer of AddA and AddB. Mg(2+) serves as cofactor. The cofactor is [4Fe-4S] cluster.

The heterodimer acts as both an ATP-dependent DNA helicase and an ATP-dependent, dual-direction single-stranded exonuclease. Recognizes the chi site generating a DNA molecule suitable for the initiation of homologous recombination. The AddB subunit has 5' -&gt; 3' nuclease activity but not helicase activity. This is ATP-dependent helicase/deoxyribonuclease subunit B from Acetivibrio thermocellus (strain ATCC 27405 / DSM 1237 / JCM 9322 / NBRC 103400 / NCIMB 10682 / NRRL B-4536 / VPI 7372) (Clostridium thermocellum).